Reading from the N-terminus, the 196-residue chain is Carnitine operon protein CaiE (196 aa).

The segment at Q174–R196 is disordered. Residues Q187–R196 are compositionally biased toward polar residues.

Belongs to the transferase hexapeptide repeat family.

Its pathway is amine and polyamine metabolism; carnitine metabolism. Its function is as follows. Overproduction of CaiE stimulates the activity of CaiB and CaiD. This Escherichia coli (strain K12) protein is Carnitine operon protein CaiE (caiE).